An 807-amino-acid polypeptide reads, in one-letter code: ATP-binding cassette sub-family F member 1 (807 aa).

The tract at residues 1-227 (MPKGPKQQPP…KEKAKKAEQM (227 aa)) is disordered. Ser22 carries the phosphoserine modification. Basic residues predominate over residues 29-39 (KKGKKDKKTKK). Positions 47 to 65 (VEDRQAGEEEKVLKEKEQQ) are enriched in basic and acidic residues. A compositionally biased stretch (basic residues) spans 73 to 85 (QKKKRDTRKGRRK). A Phosphoserine modification is found at Ser106. A phosphoserine; by CK2 mark is found at Ser110 and Ser141. Over residues 148–161 (EKHPPKPAKPEKNR) the composition is skewed to basic and acidic residues. Position 167 is a phosphoserine (Ser167). Residues 197–207 (LDDEEEQDEEE) show a composition bias toward acidic residues. Residues 208–227 (IKEKEPPKQGKEKAKKAEQM) are compositionally biased toward basic and acidic residues. The region spanning 266–510 (IKLEKFSISA…MYQQKQKELL (245 aa)) is the ABC transporter 1 domain. 298–305 (GPNGKGKT) is a binding site for ATP. Positions 521 to 542 (KELKAGGKSTKQAEKQTKEALT) are enriched in basic and acidic residues. Positions 521 to 564 (KELKAGGKSTKQAEKQTKEALTRKQQKCRRKNQDEESQEAPELL) are disordered. Ser557 is modified (phosphoserine). An ABC transporter 2 domain is found at 587–802 (LGLHGVTFGY…VLEALGEVMV (216 aa)). 620-627 (GPNGVGKS) provides a ligand contact to ATP.

The protein belongs to the ABC transporter superfamily. ABCF family. EF3 subfamily. In terms of assembly, interacts (via N-terminus) with EIF2S1; the interaction is independent of its phosphorylated status. Associates (via both ABC transporter domains) with the ribosomes. Post-translationally, phosphorylated at phosphoserine and phosphothreonine. Phosphorylation on Ser-110 and Ser-141 by CK2; inhibits association of EIF2 with ribosomes.

Its subcellular location is the cytoplasm. The protein resides in the nucleus. The protein localises to the nucleoplasm. It localises to the nucleus envelope. Functionally, required for efficient Cap- and IRES-mediated mRNA translation initiation. Not involved in the ribosome biogenesis. The polypeptide is ATP-binding cassette sub-family F member 1 (ABCF1) (Sus scrofa (Pig)).